Reading from the N-terminus, the 213-residue chain is Protein Syd (213 aa).

It belongs to the Syd family.

It localises to the cell inner membrane. In terms of biological role, interacts with the SecY protein in vivo. May bind preferentially to an uncomplexed state of SecY, thus functioning either as a chelating agent for excess SecY in the cell or as a regulatory factor that negatively controls the translocase function. This Shewanella halifaxensis (strain HAW-EB4) protein is Protein Syd.